The sequence spans 132 residues: Small ribosomal subunit protein uS8 (132 aa).

Belongs to the universal ribosomal protein uS8 family. As to quaternary structure, part of the 30S ribosomal subunit. Contacts proteins S5 and S12.

In terms of biological role, one of the primary rRNA binding proteins, it binds directly to 16S rRNA central domain where it helps coordinate assembly of the platform of the 30S subunit. The polypeptide is Small ribosomal subunit protein uS8 (Stenotrophomonas maltophilia (strain K279a)).